Consider the following 338-residue polypeptide: Aspartate-semialdehyde dehydrogenase (338 aa).

NADP(+)-binding positions include 13–16 (TGNV) and 41–42 (SS). Residue Arg-101 coordinates phosphate. The active-site Acyl-thioester intermediate is the Cys-132. Substrate is bound at residue Gln-159. NADP(+) is bound by residues 162–163 (SG) and Pro-187. Lys-216 provides a ligand contact to phosphate. Arg-237 is a substrate binding site. His-244 (proton acceptor) is an active-site residue. NADP(+) is bound at residue Asn-317.

This sequence belongs to the aspartate-semialdehyde dehydrogenase family. Homodimer.

It carries out the reaction L-aspartate 4-semialdehyde + phosphate + NADP(+) = 4-phospho-L-aspartate + NADPH + H(+). Its pathway is amino-acid biosynthesis; L-lysine biosynthesis via DAP pathway; (S)-tetrahydrodipicolinate from L-aspartate: step 2/4. It functions in the pathway amino-acid biosynthesis; L-methionine biosynthesis via de novo pathway; L-homoserine from L-aspartate: step 2/3. It participates in amino-acid biosynthesis; L-threonine biosynthesis; L-threonine from L-aspartate: step 2/5. Its function is as follows. Catalyzes the NADPH-dependent formation of L-aspartate-semialdehyde (L-ASA) by the reductive dephosphorylation of L-aspartyl-4-phosphate. This Rickettsia conorii (strain ATCC VR-613 / Malish 7) protein is Aspartate-semialdehyde dehydrogenase.